A 255-amino-acid polypeptide reads, in one-letter code: Thiazole synthase (255 aa).

Lys-96 (schiff-base intermediate with DXP) is an active-site residue. Residues Gly-157, 183–184 (AG), and 205–206 (NT) contribute to the 1-deoxy-D-xylulose 5-phosphate site.

Belongs to the ThiG family. As to quaternary structure, homotetramer. Forms heterodimers with either ThiH or ThiS.

It is found in the cytoplasm. The enzyme catalyses [ThiS sulfur-carrier protein]-C-terminal-Gly-aminoethanethioate + 2-iminoacetate + 1-deoxy-D-xylulose 5-phosphate = [ThiS sulfur-carrier protein]-C-terminal Gly-Gly + 2-[(2R,5Z)-2-carboxy-4-methylthiazol-5(2H)-ylidene]ethyl phosphate + 2 H2O + H(+). Its pathway is cofactor biosynthesis; thiamine diphosphate biosynthesis. Catalyzes the rearrangement of 1-deoxy-D-xylulose 5-phosphate (DXP) to produce the thiazole phosphate moiety of thiamine. Sulfur is provided by the thiocarboxylate moiety of the carrier protein ThiS. In vitro, sulfur can be provided by H(2)S. This is Thiazole synthase from Geobacillus sp. (strain WCH70).